Here is a 458-residue protein sequence, read N- to C-terminus: Mannan endo-1,6-alpha-mannosidase DFG5 (458 aa).

Positions Met1–Ala26 are cleaved as a signal peptide. N-linked (GlcNAc...) asparagine glycosylation is found at Asn89, Asn114, Asn138, Asn208, Asn231, Asn245, Asn270, Asn273, and Asn417. The interval Pro399–Ser418 is disordered. Gly437 carries GPI-anchor amidated glycine lipidation. Positions Ala438–Phe458 are cleaved as a propeptide — removed in mature form.

It belongs to the glycosyl hydrolase 76 family. N-glycosylated.

Its subcellular location is the cell membrane. The enzyme catalyses Random hydrolysis of (1-&gt;6)-alpha-D-mannosidic linkages in unbranched (1-&gt;6)-mannans.. Required for normal synthesis of the cell wall. This chain is Mannan endo-1,6-alpha-mannosidase DFG5 (DFG5), found in Saccharomyces cerevisiae (strain ATCC 204508 / S288c) (Baker's yeast).